Here is a 156-residue protein sequence, read N- to C-terminus: Endoribonuclease YbeY (156 aa).

Zn(2+) contacts are provided by histidine 122, histidine 126, and histidine 132.

This sequence belongs to the endoribonuclease YbeY family. Zn(2+) serves as cofactor.

The protein localises to the cytoplasm. Single strand-specific metallo-endoribonuclease involved in late-stage 70S ribosome quality control and in maturation of the 3' terminus of the 16S rRNA. In Syntrophomonas wolfei subsp. wolfei (strain DSM 2245B / Goettingen), this protein is Endoribonuclease YbeY.